The chain runs to 84 residues: MADSDTSAPAKAKPAALRKGALVKVNRKAYSASIEAAASDPTPPDYIFDGPGELLVVKGDYGQVRWNRPVPDVWLRMDQLEVYS.

The protein belongs to the complex I NdhO subunit family. NDH-1 can be composed of about 15 different subunits; different subcomplexes with different compositions have been identified which probably have different functions.

The protein resides in the cellular thylakoid membrane. It catalyses the reaction a plastoquinone + NADH + (n+1) H(+)(in) = a plastoquinol + NAD(+) + n H(+)(out). The enzyme catalyses a plastoquinone + NADPH + (n+1) H(+)(in) = a plastoquinol + NADP(+) + n H(+)(out). NDH-1 shuttles electrons from an unknown electron donor, via FMN and iron-sulfur (Fe-S) centers, to quinones in the respiratory and/or the photosynthetic chain. The immediate electron acceptor for the enzyme in this species is believed to be plastoquinone. Couples the redox reaction to proton translocation, and thus conserves the redox energy in a proton gradient. Cyanobacterial NDH-1 also plays a role in inorganic carbon-concentration. The protein is NAD(P)H-quinone oxidoreductase subunit O of Synechococcus sp. (strain CC9902).